Consider the following 90-residue polypeptide: MDDPSFLTGRSTFAKRRRARRMNVCKCGAIMHNNKDCKSSSISSHKLDRLRFVKEGRVALTGETPVYRTWVKWVETEYHIYIVETSDDED.

The segment at 15–18 (KRRR) is basic.

The protein belongs to the carlaviruses nucleic acid-binding protein family.

Functionally, suppressor of viral-induced RNA silencing. The potential mechanism of action is based on sequestering siRNAs. In Grapevine virus A (isolate Is 151) (GVA), this protein is RNA silencing suppressor (ORF5).